Consider the following 193-residue polypeptide: Peptidyl-tRNA hydrolase (193 aa).

Tyr16 contacts tRNA. The Proton acceptor role is filled by His21. TRNA contacts are provided by Phe67, Asn69, and Asn115.

Belongs to the PTH family. In terms of assembly, monomer.

The protein resides in the cytoplasm. It carries out the reaction an N-acyl-L-alpha-aminoacyl-tRNA + H2O = an N-acyl-L-amino acid + a tRNA + H(+). In terms of biological role, hydrolyzes ribosome-free peptidyl-tRNAs (with 1 or more amino acids incorporated), which drop off the ribosome during protein synthesis, or as a result of ribosome stalling. Catalyzes the release of premature peptidyl moieties from peptidyl-tRNA molecules trapped in stalled 50S ribosomal subunits, and thus maintains levels of free tRNAs and 50S ribosomes. This is Peptidyl-tRNA hydrolase from Vesicomyosocius okutanii subsp. Calyptogena okutanii (strain HA).